A 153-amino-acid polypeptide reads, in one-letter code: Small ribosomal subunit protein uS13 (153 aa).

Belongs to the universal ribosomal protein uS13 family.

It is found in the cytoplasm. Its function is as follows. Located at the top of the head of the 40S subunit, it contacts several helices of the 18S rRNA. This chain is Small ribosomal subunit protein uS13 (RPS18), found in Chlamydomonas reinhardtii (Chlamydomonas smithii).